The primary structure comprises 76 residues: Small ribosomal subunit protein bS18 (76 aa).

The protein belongs to the bacterial ribosomal protein bS18 family. In terms of assembly, part of the 30S ribosomal subunit. Forms a tight heterodimer with protein bS6.

Binds as a heterodimer with protein bS6 to the central domain of the 16S rRNA, where it helps stabilize the platform of the 30S subunit. The sequence is that of Small ribosomal subunit protein bS18 from Aeromonas salmonicida (strain A449).